Here is a 549-residue protein sequence, read N- to C-terminus: Fumarate hydratase 1, mitochondrial (549 aa).

Cys114 is a [4Fe-4S] cluster binding site. Residues 115-116, Arg154, Gly197, and 200-206 contribute to the (S)-malate site; these read QD and NKSFLLQ. [4Fe-4S] cluster contacts are provided by Cys233 and Cys328. Residues Arg404, 450 to 454, and Lys474 contribute to the (S)-malate site; that span reads TTAGR.

The protein belongs to the class-I fumarase family. Homodimer. It depends on [4Fe-4S] cluster as a cofactor.

It localises to the mitochondrion. The enzyme catalyses (S)-malate = fumarate + H2O. It functions in the pathway carbohydrate metabolism; tricarboxylic acid cycle; (S)-malate from fumarate: step 1/1. Its activity is regulated as follows. Specifically and competitively inhibited by 2-thiomalate, which coordinates with the catalytic [4Fe-4S] cluster. In terms of biological role, catalyzes the reversible hydration of fumarate to (S)-malate. Catalyzes the hydration of fumarate to L-malate in the tricarboxylic acid (TCA) cycle to facilitate a transition step in the production of energy in the form of NADH. The chain is Fumarate hydratase 1, mitochondrial from Leishmania major.